The primary structure comprises 183 residues: Ribonuclease H (183 aa).

Residues 2–151 form the RNase H type-1 domain; sequence SQARFIAFSD…VDQLAQAAAR (150 aa). The Mg(2+) site is built by D11, E57, D79, and D143.

Belongs to the RNase H family. In terms of assembly, monomer. It depends on Mg(2+) as a cofactor.

The protein resides in the cytoplasm. It carries out the reaction Endonucleolytic cleavage to 5'-phosphomonoester.. In terms of biological role, endonuclease that specifically degrades the RNA of RNA-DNA hybrids. This chain is Ribonuclease H, found in Anaeromyxobacter sp. (strain K).